The following is a 277-amino-acid chain: MGQKINPNGFRLGITTDHVSHWYADSNQPGQRYKDYIREDVKIRELMSKGMDRAGISKVEIERTRDRVRVDIHTARPGIVIGRRGAEADRIRGELEKLTGKQIQLNILEVKNPEIDAQLVAQGVAEQLASRVAFRRAMKKAIQSAQRAGAKGIRIQCAGRLGGAEMSRSEFYREGRVPLHTLRANIDYGFFEAKTTFGRIGVKVWIYKGDLTDKELAAQQAAAPSSRGRNDRRGGGGGERRRRPNDRNDRGGRRERDSAAAPQQNSAAEANNAEGGK.

Residues 43 to 111 form the KH type-2 domain; the sequence is IRELMSKGMD…QIQLNILEVK (69 aa). Positions 217–277 are disordered; that stretch reads AAQQAAAPSS…AEANNAEGGK (61 aa). Basic and acidic residues predominate over residues 245–258; the sequence is NDRNDRGGRRERDS. Over residues 259 to 277 the composition is skewed to low complexity; it reads AAAPQQNSAAEANNAEGGK.

This sequence belongs to the universal ribosomal protein uS3 family. In terms of assembly, part of the 30S ribosomal subunit. Forms a tight complex with proteins S10 and S14.

Binds the lower part of the 30S subunit head. Binds mRNA in the 70S ribosome, positioning it for translation. In Kocuria rhizophila (strain ATCC 9341 / DSM 348 / NBRC 103217 / DC2201), this protein is Small ribosomal subunit protein uS3.